Reading from the N-terminus, the 449-residue chain is Wilms tumor protein homolog (449 aa).

A disordered region spans residues 48 to 84; it reads YGSLGGPAPPPAPPPPPPPPPHSFIKQEPSWGGAEPH. Residues 54–69 show a composition bias toward pro residues; sequence PAPPPAPPPPPPPPPH. Glycyl lysine isopeptide (Lys-Gly) (interchain with G-Cter in SUMO) cross-links involve residues Lys73 and Lys177. The short motif at 236–244 is the 9aaTAD element; sequence MTWNQMNLG. C2H2-type zinc fingers lie at residues 323–347, 353–377, and 383–405; these read FMCA…SRKH, YQCD…QRRH, and FQCK…TRTH. Important for interaction with target DNA stretches follow at residues 367–381 and 393–401; these read SDQL…TGVK and SRSDHLKTH. The KTS motif signature appears at 408 to 410; the sequence is KTS. The C2H2-type 4 zinc finger occupies 414–438; sequence FSCRWPSCQKKFARSDELVRHHNMH. Lys444 is covalently cross-linked (Glycyl lysine isopeptide (Lys-Gly) (interchain with G-Cter in SUMO2)).

It belongs to the EGR C2H2-type zinc-finger protein family. In terms of assembly, interacts with ZNF224 via the zinc-finger region. Interacts with WTAP, AMER1 and SRY. Homodimer. Interacts with WTIP. Interacts with actively translating polysomes. Detected in nuclear ribonucleoprotein (mRNP) particles. Interacts with U2AF2. Interacts with HNRNPU via the zinc-finger region. Interacts with CITED2. Interacts with RBM4.

The protein localises to the nucleus speckle. It localises to the nucleus. It is found in the nucleoplasm. Its subcellular location is the nucleolus. The protein resides in the cytoplasm. Functionally, transcription factor that plays an important role in cellular development and cell survival. Recognizes and binds to the DNA sequence 5'-GCG(T/G)GGGCG-3'. Regulates the expression of numerous target genes, including EPO. Plays an essential role for development of the urogenital system. It has a tumor suppressor as well as an oncogenic role in tumor formation. Function may be isoform-specific: isoforms lacking the KTS motif may act as transcription factors. Isoforms containing the KTS motif may bind mRNA and play a role in mRNA metabolism or splicing. Isoform 1 has lower affinity for DNA, and can bind RNA. In Sus scrofa (Pig), this protein is Wilms tumor protein homolog (WT1).